The sequence spans 43 residues: Defensin-B (43 aa).

Cystine bridges form between Cys3–Cys34, Cys20–Cys39, and Cys24–Cys41.

It localises to the secreted. Antibacterial protein. Strong activity against the Gram-positive bacteria M.luteus, B.megaterium and S.aureus. Reduced activity against Gram-positive bacterium B.subtilis and weak activity against Gram-negative bacterium X.japonicus. No detectable activity against the Gram-negative bacteria E.asbriae, E.coli, P.aeruginosa and S.marcescens. This Anomala cuprea (Cupreous chafer beetle) protein is Defensin-B.